The following is a 136-amino-acid chain: ATP synthase epsilon chain 2 (136 aa).

The protein belongs to the ATPase epsilon chain family. As to quaternary structure, F-type ATPases have 2 components, CF(1) - the catalytic core - and CF(0) - the membrane proton channel. CF(1) has five subunits: alpha(3), beta(3), gamma(1), delta(1), epsilon(1). CF(0) has three main subunits: a, b and c.

The protein localises to the cell inner membrane. Its function is as follows. Produces ATP from ADP in the presence of a proton gradient across the membrane. In Nitrobacter hamburgensis (strain DSM 10229 / NCIMB 13809 / X14), this protein is ATP synthase epsilon chain 2.